The chain runs to 328 residues: Palmitoyltransferase ZDHHC15A (328 aa).

Residues 1–14 are Cytoplasmic-facing; sequence MLLPACLRRCARLL. Residues 15–35 traverse the membrane as a helical segment; it reads FWIPVLVVIVVVMWSYYAYVV. The Lumenal portion of the chain corresponds to 36 to 48; sequence HFCWILLSSATQR. A helical transmembrane segment spans residues 49 to 69; sequence VVFLCLFHLCFGMFSWSFWKA. Residues 70–166 lie on the Cytoplasmic side of the membrane; the sequence is VSTPPSSPSV…NNCMGFSNYK (97 aa). A DHHC domain is found at 123 to 173; the sequence is RFCHHCQLIKPDRCHHCSVCQTCVLKMDHHCLWLNNCMGFSNYKFFMLFLL. Zn(2+) contacts are provided by Cys-125 and Cys-128. Lys-132 serves as a coordination point for substrate. Positions 138, 139, 142, 145, and 152 each coordinate Zn(2+). Cys-153 functions as the S-palmitoyl cysteine intermediate in the catalytic mechanism. Position 159 (Cys-159) interacts with Zn(2+). A helical membrane pass occupies residues 167-187; the sequence is FFMLFLLYSLLYCLLIVSTVT. At 188 to 206 the chain is on the lumenal side; the sequence is PTVIQLWRGRLFDSCVKLH. A helical transmembrane segment spans residues 207–227; that stretch reads VLFLTLVSAIFAITLCFLLIF. At 228-328 the chain is on the cytoplasmic side; the sequence is HIWLLTSNKT…KEAAVTIAVD (101 aa).

This sequence belongs to the DHHC palmitoyltransferase family. In terms of processing, autopalmitoylated (in vitro).

The protein localises to the golgi apparatus membrane. The protein resides in the postsynaptic density. It carries out the reaction L-cysteinyl-[protein] + hexadecanoyl-CoA = S-hexadecanoyl-L-cysteinyl-[protein] + CoA. It catalyses the reaction L-cysteinyl-[protein] + tetradecanoyl-CoA = S-tetradecanoyl-L-cysteinyl-[protein] + CoA. The catalysed reaction is L-cysteinyl-[protein] + octadecanoyl-CoA = S-octadecanoyl-L-cysteinyl-[protein] + CoA. Functionally, palmitoyltransferase that catalyzes the addition of palmitate onto various protein substrates. Has no stringent fatty acid selectivity and in addition to palmitate can also transfer onto target proteins myristate from tetradecanoyl-CoA and stearate from octadecanoyl-CoA. May thereby regulate target proteins association and localization to membranes. This Danio rerio (Zebrafish) protein is Palmitoyltransferase ZDHHC15A (zdhhc15a).